Reading from the N-terminus, the 2319-residue chain is MQIALFACFFLSLFNFCSSAIRRYYLGAVELSWNYIQSDLLSVLHTDSRFLPRMSTSFPFNTSIMYKKTVFVEYKDQLFNIAKPRPPWMGLLGPTIWTEVHDTVVITLKNMASHPVSLHAVGVSYWKASEGDEYEDQTSQMEKEDDKVFPGESHTYVWQVLKENGPMASDPPCLTYSYMSHVDLVKDLNSGLIGALLVCKEGSLSKERTQMLYQFVLLFAVFDEGKSWHSETNDSYTQSMDSASARDWPKMHTVNGYVNRSLPGLIGCHRKSVYWHVIGMGTTPEIHSIFLEGHTFFVRNHRQASLEISPITFLTAQTLLIDLGQFLLFCHISSHKHDGMEAYVKVDSCPEESQWQKKNNNEEMEDYDDDLYSEMDMFTLDYDSSPFIQIRSVAKKYPKTWIHYISAEEEDWDYAPSVPTSDNGSYKSQYLSNGPHRIGRKYKKVRFIAYTDETFKTRETIQHESGLLGPLLYGEVGDTLLIIFKNQASRPYNIYPHGITDVSPLHARRLPRGIKHVKDLPIHPGEIFKYKWTVTVEDGPTKSDPRCLTRYYSSFINPERDLASGLIGPLLICYKESVDQRGNQMMSDKRNVILFSIFDENQSWYITENMQRFLPNAAKTQPQDPGFQASNIMHSINGYVFDSLELTVCLHEVAYWHILSVGAQTDFLSIFFSGYTFKHKMVYEDTLTLFPFSGETVFMSMENPGLWVLGCHNSDFRKRGMTALLKVSSCDKSTSDYYEEIYEDIPTQLVNENNVIDPRSFFQNTNHPNTRKKKFKDSTIPKNDMEKIEPQFEEIAEMLKVQSVSVSDMLMLLGQSHPTPHGLFLSDGQEAIYEAIHDDHSPNAIDSNEGPSKVTQLRPESHHSEKIVFTPQPGLQLRSNKSLETTIEVKWKKLGLQVSSLPSNLMTTTILSDNLKATFEKTDSSGFPDMPVHSSSKLSTTAFGKKAYSLVGSHVPLNVSEENSDSNILDSTLMYSQESLPRDNILSMENDRLLREKRFHGIALLTKDNTLFKDNVSLMKTNKTYNHSTTNEKLHTESPTSIENSTTDLQDAILKVNSEIQEVTALIHDGTLLGKNSTYLRLNHMLNRTTSTKNKDIFHRKDEDPIPQDEENTIMPFSKMLFLSESSNWFKKTNGNNSLNSEQEHSPKQLVYLMFKKYVKNQSFLSEKNKVTVEQDGFTKNIGLKDMAFPHNMSIFLTTLSNVHENGRHNQEKNIQEEIEKEALIEEKVVLPQVHEATGSKNFLKDILILGTRQNISLYEVHVPVLQNITSINNSTNTVQIHMEHFFKRRKDKETNSEGLVNKTREMVKNYPSQKNITTQRSKRALGQFRLSTQWLKTINCSTQCIIKQIDHSKEMKKFITKSSLSDSSVIKSTTQTNSSDSHIVKTSAFPPIDLKRSPFQNKFSHVQASSYIYDFKTKSSRIQESNNFLKETKINNPSLAILPWNMFIDQGKFTSPGKSNTNSVTYKKRENIIFLKPTLPEESGKIELLPQVSIQEEEILPTETSHGSPGHLNLMKEVFLQKIQGPTKWNKAKRHGESIKGKTESSKNTRSKLLNHHAWDYHYAAQIPKDMWKSKEKSPEIISIKQEDTILSLRPHGNSHSIGANEKQNWPQRETTWVKQGQTQRTCSQIPPVLKRHQRELSAFQSEQEATDYDDAITIETIEDFDIYSEDIKQGPRSFQQKTRHYFIAAVERLWDYGMSTSHVLRNRYQSDNVPQFKKVVFQEFTDGSFSQPLYRGELNEHLGLLGPYIRAEVEDNIMVTFKNQASRPYSFYSSLISYKEDQRGEEPRRNFVKPNETKIYFWKVQHHMAPTEDEFDCKAWAYFSDVDLERDMHSGLIGPLLICHANTLNPAHGRQVSVQEFALLFTIFDETKSWYFTENVKRNCKTPCNFQMEDPTLKENYRFHAINGYVMDTLPGLVMAQDQRIRWYLLSMGNNENIQSIHFSGHVFTVRKKEEYKMAVYNLYPGVFETLEMIPSRAGIWRVECLIGEHLQAGMSTLFLVYSKQCQIPLGMASGSIRDFQITASGHYGQWAPNLARLHYSGSINAWSTKEPFSWIKVDLLAPMIVHGIKTQGARQKFSSLYISQFIIMYSLDGKKWLSYQGNSTGTLMVFFGNVDSSGIKHNSFNPPIIARYIRLHPTHSSIRSTLRMELMGCDLNSCSIPLGMESKVISDTQITASSYFTNMFATWSPSQARLHLQGRTNAWRPQVNDPKQWLQVDLQKTMKVTGIITQGVKSLFTSMFVKEFLISSSQDGHHWTQILYNGKVKVFQGNQDSSTPMMNSLDPPLLTRYLRIHPQIWEHQIALRLEILGCEAQQQY.

Positions 1–19 (MQIALFACFFLSLFNFCSS) are cleaved as a signal peptide. Plastocyanin-like domains lie at 20–199 (AIRR…LLVC) and 207–349 (ERTQ…VDSC). The F5/8 type A 1 domain maps to 20-349 (AIRRYYLGAV…MEAYVKVDSC (330 aa)). Residue Asn61 is glycosylated (N-linked (GlcNAc...) asparagine). A disulfide bridge links Cys173 with Cys199. N-linked (GlcNAc...) asparagine glycans are attached at residues Asn233 and Asn259. A Sulfotyrosine modification is found at Tyr367. Plastocyanin-like domains follow at residues 399–573 (KTWI…LLIC) and 583–730 (NQMM…VSSC). The region spanning 399-730 (KTWIHYISAE…MTALLKVSSC (332 aa)) is the F5/8 type A 2 domain. Residue Asn423 is glycosylated (N-linked (GlcNAc...) asparagine). A disulfide bridge links Cys547 with Cys573. Asn601 carries N-linked (GlcNAc...) asparagine glycosylation. A sulfotyrosine mark is found at Tyr737, Tyr738, and Tyr742. Residues 760 to 1640 (SFFQNTNHPN…IPPVLKRHQR (881 aa)) are b. Asn880, Asn958, Asn1015, Asn1022, Asn1026, Asn1044, Asn1076, Asn1087, Asn1136, Asn1161, Asn1192, Asn1255, Asn1268, Asn1273, Asn1274, Asn1302, Asn1316, Asn1340, and Asn1378 each carry an N-linked (GlcNAc...) asparagine glycan. The segment at 1530 to 1549 (WNKAKRHGESIKGKTESSKN) is disordered. Positions 1536 to 1548 (HGESIKGKTESSK) are enriched in basic and acidic residues. Tyr1669 and Tyr1687 each carry sulfotyrosine. Plastocyanin-like domains lie at 1683–1845 (KTRH…LLIC) and 1855–2008 (GRQV…SKQC). An F5/8 type A 3 domain is found at 1683–2008 (KTRHYFIAAV…TLFLVYSKQC (326 aa)). Asn1797 is a glycosylation site (N-linked (GlcNAc...) asparagine). 3 disulfides stabilise this stretch: Cys1819–Cys1845, Cys2008–Cys2156, and Cys2161–Cys2313. F5/8 type C domains follow at residues 2008–2156 (CQIP…LMGC) and 2161–2313 (CSIP…ILGC). An N-linked (GlcNAc...) asparagine glycan is attached at Asn2105.

This sequence belongs to the multicopper oxidase family. In terms of assembly, interacts with vWF. vWF binding is essential for the stabilization of F8 in circulation. The binding of vWF and activation depend on the sulfation of Tyr-1669. Post-translationally, proteolytically cleaved by cathepsin CTSG to produce a partially activated form. Found in most tissues.

The protein localises to the secreted. The protein resides in the extracellular space. Factor VIII, along with calcium and phospholipid, acts as a cofactor for factor IXa when it converts factor X to the activated form, factor Xa. The protein is Coagulation factor VIII (F8) of Mus musculus (Mouse).